Here is a 307-residue protein sequence, read N- to C-terminus: Ribosomal RNA small subunit methyltransferase H (307 aa).

Residues 32-34 (GGH), Asp52, Phe78, Asp100, and Gln107 contribute to the S-adenosyl-L-methionine site.

Belongs to the methyltransferase superfamily. RsmH family.

It is found in the cytoplasm. It catalyses the reaction cytidine(1402) in 16S rRNA + S-adenosyl-L-methionine = N(4)-methylcytidine(1402) in 16S rRNA + S-adenosyl-L-homocysteine + H(+). In terms of biological role, specifically methylates the N4 position of cytidine in position 1402 (C1402) of 16S rRNA. The protein is Ribosomal RNA small subunit methyltransferase H of Coxiella burnetii (strain Dugway 5J108-111).